A 474-amino-acid chain; its full sequence is Trehalose-6-phosphate synthase (474 aa).

R10 is a binding site for D-glucose 6-phosphate. 22–23 lines the UDP-alpha-D-glucose pocket; it reads GG. Residues Y77 and D131 each contribute to the D-glucose 6-phosphate site. The UDP-alpha-D-glucose site is built by R263 and K268. R301 contacts D-glucose 6-phosphate. UDP-alpha-D-glucose-binding positions include F340 and 366–370; that span reads LVAKE.

It belongs to the glycosyltransferase 20 family. As to quaternary structure, homotetramer.

The catalysed reaction is D-glucose 6-phosphate + UDP-alpha-D-glucose = alpha,alpha-trehalose 6-phosphate + UDP + H(+). It functions in the pathway glycan biosynthesis; trehalose biosynthesis. Its function is as follows. Probably involved in the osmoprotection via the biosynthesis of trehalose. Catalyzes the transfer of glucose from UDP-alpha-D-glucose (UDP-Glc) to D-glucose 6-phosphate (Glc-6-P) to form trehalose-6-phosphate. Acts with retention of the anomeric configuration of the UDP-sugar donor. The sequence is that of Trehalose-6-phosphate synthase from Pseudomonas savastanoi (Pseudomonas syringae pv. savastanoi).